A 226-amino-acid chain; its full sequence is RPA-interacting protein A (226 aa).

Residues 1 to 45 (MEAERRHRALYKGTTPPWKETYRKRCVERLKRNRSKLLDKFRQVG) form an interaction with importin beta region. The interval 49-171 (HGGVGGSFLV…QCGVYINTQS (123 aa)) is interaction with RPA1. An RIP-type zinc finger spans residues 144 to 219 (CPVCNRNYLT…ASLFMSCQEC (76 aa)).

In terms of assembly, interacts directly with the rpa1 subunit of RPA complex. Interacts with importin beta, but not with importin alpha. Forms a complex with the RPA complex and importin beta, which is dissociated by Ran-GTP.

The protein localises to the nucleus. Functionally, mediates the import of RPA complex into the nucleus, via its interaction with importin beta. The sequence is that of RPA-interacting protein A (rpain-a) from Xenopus laevis (African clawed frog).